The sequence spans 573 residues: Mucin-13 (573 aa).

An N-terminal signal peptide occupies residues 1-17 (MKGFLLLSLSLLLVTVG). Residues 16–234 (VGSSSQASST…VPSGGSTGPS (219 aa)) show a composition bias toward low complexity. A disordered region spans residues 16–237 (VGSSSQASST…GGSTGPSDLC (222 aa)). Topologically, residues 18 to 480 (SSSQASSTTS…FGYSGMNCKD (463 aa)) are extracellular. Positions 233–273 (PSDLCNPNPCKGTASCVKLHSKHFCLCLEGYYYNSSLSSCV) constitute an EGF-like 1 domain. Disulfide bonds link cysteine 237/cysteine 248, cysteine 242/cysteine 257, and cysteine 259/cysteine 272. 3 N-linked (GlcNAc...) asparagine glycosylation sites follow: asparagine 266, asparagine 316, and asparagine 397. The region spanning 274 to 391 (KGTTFPGDIS…DYVSINLCDH (118 aa)) is the SEA domain. EGF-like domains are found at residues 385-425 (SINL…PFCV) and 425-467 (VAVT…RKCE). Disulfide bonds link cysteine 389/cysteine 402, cysteine 394/cysteine 408, cysteine 410/cysteine 424, cysteine 429/cysteine 441, cysteine 433/cysteine 451, and cysteine 453/cysteine 466. Residues 481–508 (QFQLILTIVGTIAGALILILLIAFIVSA) traverse the membrane as a helical segment. Over 509 to 573 (RSKNKKKDGE…NQRSMPRPDY (65 aa)) the chain is Cytoplasmic. The segment at 548–573 (PKVRTGVPSQTPNPYANQRSMPRPDY) is disordered. Polar residues predominate over residues 554–567 (VPSQTPNPYANQRS).

Homodimer of beta subunits. In terms of processing, cleaved into two subunits, alpha and beta, probably between the first EGF domain and the SEA domain. Beta subunit contains the cytoplasmic tail and alpha subunit the extracellular tail. The homooligomerization into dimers is dependent on intrachain disulfide bonds. Post-translationally, highly N-glycosylated.

Its subcellular location is the cell membrane. The protein localises to the secreted. Its function is as follows. Epithelial and hemopoietic transmembrane mucin that may play a role in cell signaling. This is Mucin-13 (Muc13) from Mus musculus (Mouse).